The primary structure comprises 1045 residues: Protein madd-4 (1045 aa).

A signal peptide spans 1–23 (MKCSYTVVFLLFYLLIASFHVDA). 5 TSP type-1 domains span residues 24-71 (LSWA…KTCE), 236-292 (RCRW…NCVS), 294-510 (SCGR…HPCP), 512-572 (FWLT…NVVA), and 576-635 (TWVT…GSCS). Disulfide bonds link Cys35-Cys65, Cys39-Cys70, and Cys50-Cys55. 2 N-linked (GlcNAc...) asparagine glycosylation sites follow: Asn268 and Asn280. Positions 637-732 (PELLSNRVFE…FTDRLQGNVT (96 aa)) constitute an Ig-like C2-type domain. Residues Cys674 and Cys722 are joined by a disulfide bond. N-linked (GlcNAc...) asparagine glycans are attached at residues Asn730 and Asn781. Residues 811–873 (RWDIGHWSEC…TRPCHREDCP (63 aa)) form the TSP type-1 6 domain. 2 N-linked (GlcNAc...) asparagine glycosylation sites follow: Asn899 and Asn906. Residues 932-990 (CKAEWRTSDWGSCSSECGTGGVQLRLLSCVWISSGRPAGRNCEQMRRPHSARACVADEP) enclose the TSP type-1 7 domain. Residues 1004-1041 (RDASCQDQSRFCDIIKLFHSCDSLEVRQKCCSTCTFVE) form the PLAC domain.

As to quaternary structure, interacts with eva-1 (via the SUEL-type lectin domain). Interacts with unc-5. Interacts with unc-40; the interaction is required for the localization of unc-40 to postsynaptic domains. Isoform a forms homodimers and heterodimers with isoform b. Isoform b forms homodimers and heterodimers with isoform a. Isoform b interacts with nlg-1 (via extracellular domain); the interaction is required for nlg-1 localization to postsynaptic domains. Isoform b interacts (via the Ig-like C2-type domain) with nrx-1 (via C-terminus). Isoform a: Expressed in the commissural GABAergic and cholinergic motor neurons in the first larval stage but only in the cholinergic motor neurons in later larval stages and in adult animals. At the L1 larval stage, mainly localized at the nerve ring and at the dorsal cord. Isoform b: Expressed in the commissural GABAergic and cholinergic motor neurons whose cell bodies reside in the ventral nerve cord and which extend axons into the ventral and dorsal nerve cord. Also expressed in the head neurons RIA, RIC, lateral IL1s, lateral IL2s, OLLs, RMEs and SABs, all of which extend axons into the nerve ring. Expressed in the embryogenic blast cells and the corresponding terminally differentiated ventral cord motor neurons and head neurons.

The protein localises to the cell projection. It is found in the axon. The protein resides in the secreted. It localises to the synapse. Its subcellular location is the extracellular space. The protein localises to the extracellular matrix. In terms of biological role, component of an extracellular matrix cue that is involved in the guidance of dorsoventral midline migrations and in the specification of postsynaptic domains at neuromuscular junctions (NMJs). Acts as a ligand for the netrin receptor unc-40 and the neuroligin receptor nlg-1. Secreted by the dorsal and ventral nerve cords to attract sensory axons and muscle membrane extensions called muscle arms. In parallel with unc-6 and slt-1, involved in the netrin receptor unc-40 dependent guidance of the AVM and PVM mechanosensory axons along the dorsal-ventral axis. The unc-40 coreceptor eva-1 is enhancing the responsiveness of unc-40 to the madd-4 guidance cue to attract the muscle arm extensions and AVM mechanosensory axons towards the dorsoventral midline. Acts as a synaptic organizer and is required for the specification of inhibitory GABAergic and excitatory cholinergic identities of postsynaptic domains at neuromuscular junctions (NMJs). Required for the recruitment of unc-40 to both cholinergic and GABAergic NMJs. Promotes the clustering of ACh receptors and GABA(A) receptors at postsynaptic sites during synaptogenesis. The binding to the presynaptic adhesion protein nrx-1 and to the neuroligin nlg-1 at postsynaptic sites promotes clustering of GABAergic receptors at postsynaptic NMJs, thereby contributing to normal GABAergic synaptic transmission. Isoform a and isoform c: Promotes the clustering of acetylcholine receptors (AChR) at excitatory cholinergic synapses of NMJs via the netrin receptor unc-40. Its function is as follows. Acts as a guidance cue in the attraction of muscle membrane extensions (muscle arms) to the dorsal cord and in cooperation with unc-6 to the ventral cord via the netrin receptor unc-40 and via the unc-40 coreceptor eva-1. Together with nrx-1, clusters netrin receptor unc-40 and neuroligin nlg-1 at postsynaptic sites of GABAergic NMJs, thereby promoting the recruitment of GABA(A) receptors at GABAergic synapses. Prevents the recruitment of GABAergic receptors to cholinergic synapses. In Caenorhabditis elegans, this protein is Protein madd-4.